The chain runs to 529 residues: Retinoic acid-induced protein 2 (529 aa).

2 disordered regions span residues 1 to 21 and 400 to 419; these read MDDL…PTLA and SHSS…HPGS. Residues 407-416 show a composition bias toward polar residues; it reads GTEMVSQPSH.

The polypeptide is Retinoic acid-induced protein 2 (Rai2) (Mus musculus (Mouse)).